The chain runs to 295 residues: Protoheme IX farnesyltransferase (295 aa).

Helical transmembrane passes span 8 to 28 (VTKPGIIFGNLISVIGGFLLA), 35 to 55 (YPLFLFTLVGVSLVVASGCVF), 74 to 94 (VLVKGLISPKMSLVYATLLGI), 106 to 125 (PLAMWLAVMGFVVYVGVYSL), 132 to 152 (VYGTLIGSLSGAAPPVIGYCA), 162 to 182 (LILLAIFSLWQMPHSYAIAIF), 208 to 228 (ITLYIIAFAVATLMLSLGGYA), 233 to 253 (LVVAAAVSVWWLGMALRGYKA), and 264 to 284 (FVFSIVAITSLSVMMSVDFMV).

Belongs to the UbiA prenyltransferase family. Protoheme IX farnesyltransferase subfamily.

It localises to the cell inner membrane. The enzyme catalyses heme b + (2E,6E)-farnesyl diphosphate + H2O = Fe(II)-heme o + diphosphate. Its pathway is porphyrin-containing compound metabolism; heme O biosynthesis; heme O from protoheme: step 1/1. Functionally, converts heme B (protoheme IX) to heme O by substitution of the vinyl group on carbon 2 of heme B porphyrin ring with a hydroxyethyl farnesyl side group. In Cronobacter sakazakii (strain ATCC BAA-894) (Enterobacter sakazakii), this protein is Protoheme IX farnesyltransferase.